Reading from the N-terminus, the 311-residue chain is Heparan sulfate glucosamine 3-O-sulfotransferase 1 (311 aa).

The signal sequence occupies residues 1–20 (MTLLLLGAVLLVAQPQLVPS). Asn-52 carries an N-linked (GlcNAc...) asparagine glycan. Residues 68 to 72 (KGGTR), Arg-151, and Ser-159 contribute to the 3'-phosphoadenylyl sulfate site. N-linked (GlcNAc...) asparagine glycans are attached at residues Asn-196, Asn-246, and Asn-253. Tyr-259 provides a ligand contact to 3'-phosphoadenylyl sulfate. Residues Cys-260 and Cys-269 are joined by a disulfide bond. 274–278 (KGRAH) lines the 3'-phosphoadenylyl sulfate pocket.

Belongs to the sulfotransferase 1 family.

It is found in the golgi apparatus lumen. The catalysed reaction is alpha-D-glucosaminyl-[heparan sulfate](n) + 3'-phosphoadenylyl sulfate = 3-sulfo-alpha-D-glucosaminyl-[heparan sulfate](n) + adenosine 3',5'-bisphosphate + H(+). In terms of biological role, sulfotransferase that utilizes 3'-phospho-5'-adenylyl sulfate (PAPS) to catalyze the transfer of a sulfo group to position 3 of glucosamine residues in heparan. Catalyzes the rate limiting step in the biosynthesis of heparan sulfate (HSact). This modification is a crucial step in the biosynthesis of anticoagulant heparan sulfate as it completes the structure of the antithrombin pentasaccharide binding site. The protein is Heparan sulfate glucosamine 3-O-sulfotransferase 1 (Hs3st1) of Rattus norvegicus (Rat).